A 468-amino-acid chain; its full sequence is Malate-2H(+)/Na(+)-lactate antiporter (468 aa).

Transmembrane regions (helical) follow at residues 9-29, 30-50, 73-93, 96-116, 136-156, 192-212, 233-253, 258-278, 309-329, 357-377, 405-425, and 428-448; these read LFEIIIVLGVFLALVLSFTVF, LDLPIQLALFVSWFIAMLLGI, AVLILVSVGALIGTWIAGGVV, LIYYGLEFIHPSIFLLATLII, IAMIAIGEGLGIPLPLVAGAI, LYLSIPAYVITAILFTVVGFM, TFDIHIWMLIPAVLVIVLLAM, MPVIVIGALLGAIWAVVFQGM, IVGMLDSLVVIIFGLGFGGLL, LIVAFLANIFGCAMYVSLILT, LTSGMVPWSDNGIYMAGILGV, and FSYLPFMWLSFVAIGLAIIYG.

This sequence belongs to the NhaC Na(+)/H(+) (TC 2.A.35) antiporter family.

It is found in the cell membrane. Its function is as follows. Couples proton uptake and Na(+) efflux to the substrate-product malate/lactate antiport, in an electroneutral malate-2H(+)/Na(+)-lactate exchange. Plays a role in supporting growth to high density on malate at reduced protonmotive force. In Bacillus subtilis (strain 168), this protein is Malate-2H(+)/Na(+)-lactate antiporter (mleN).